A 1071-amino-acid polypeptide reads, in one-letter code: Carbamoyl phosphate synthase large chain (1071 aa).

Positions 1-399 (MPKREDIKKV…SLLKAFKSLD (399 aa)) are carboxyphosphate synthetic domain. Residues R129, R169, G175, G176, E208, V210, E215, G241, V242, H243, Q284, and E296 each coordinate ATP. Residues 133–325 (KETMLRIGEK…IARVTAKIAI (193 aa)) enclose the ATP-grasp 1 domain. 3 residues coordinate Mg(2+): Q284, E296, and N298. Mn(2+)-binding residues include Q284, E296, and N298. Residues 400 to 540 (IDNQLGNKHW…YSTYEDSCET (141 aa)) form an oligomerization domain region. Positions 541–932 (NATTDKKKIL…YKAELAADNV (392 aa)) are carbamoyl phosphate synthetic domain. Residues 673–864 (YILMKELGVP…LAKIAAKVIA (192 aa)) form the ATP-grasp 2 domain. Residues R709, D748, L750, E755, G780, V781, H782, S783, Q823, and E835 each coordinate ATP. 3 residues coordinate Mg(2+): Q823, E835, and N837. Residues Q823, E835, and N837 each coordinate Mn(2+). The region spanning 931–1071 (NVLPLTGKVF…INEYHKEMEN (141 aa)) is the MGS-like domain. The tract at residues 933–1071 (LPLTGKVFLS…INEYHKEMEN (139 aa)) is allosteric domain.

It belongs to the CarB family. Composed of two chains; the small (or glutamine) chain promotes the hydrolysis of glutamine to ammonia, which is used by the large (or ammonia) chain to synthesize carbamoyl phosphate. Tetramer of heterodimers (alpha,beta)4. Mg(2+) serves as cofactor. It depends on Mn(2+) as a cofactor.

The catalysed reaction is hydrogencarbonate + L-glutamine + 2 ATP + H2O = carbamoyl phosphate + L-glutamate + 2 ADP + phosphate + 2 H(+). It carries out the reaction hydrogencarbonate + NH4(+) + 2 ATP = carbamoyl phosphate + 2 ADP + phosphate + 2 H(+). It functions in the pathway amino-acid biosynthesis; L-arginine biosynthesis; carbamoyl phosphate from bicarbonate: step 1/1. It participates in pyrimidine metabolism; UMP biosynthesis via de novo pathway; (S)-dihydroorotate from bicarbonate: step 1/3. Its function is as follows. Large subunit of the glutamine-dependent carbamoyl phosphate synthetase (CPSase). CPSase catalyzes the formation of carbamoyl phosphate from the ammonia moiety of glutamine, carbonate, and phosphate donated by ATP, constituting the first step of 2 biosynthetic pathways, one leading to arginine and/or urea and the other to pyrimidine nucleotides. The large subunit (synthetase) binds the substrates ammonia (free or transferred from glutamine from the small subunit), hydrogencarbonate and ATP and carries out an ATP-coupled ligase reaction, activating hydrogencarbonate by forming carboxy phosphate which reacts with ammonia to form carbamoyl phosphate. The protein is Carbamoyl phosphate synthase large chain of Methanosarcina barkeri (strain Fusaro / DSM 804).